A 2646-amino-acid polypeptide reads, in one-letter code: Probable helicase senataxin (2646 aa).

The residue at position 102 (Ser-102) is a Phosphoserine. Residue Lys-339 forms a Glycyl lysine isopeptide (Lys-Gly) (interchain with G-Cter in SUMO1) linkage. Ser-640 carries the phosphoserine modification. Disordered stretches follow at residues 705–734 (KISAEKSGKESSSYAPSNSTSRNGPEWGCD) and 825–876 (GGAL…DDED). Polar residues predominate over residues 714-727 (ESSSYAPSNSTSRN). The segment covering 867-876 (LDNSSSDDED) has biased composition (acidic residues). Residues Ser-870, Ser-871, Ser-872, Ser-938, Ser-1002, and Ser-1004 each carry the phosphoserine modification. A disordered region spans residues 1001-1023 (ISDSDEEEDEDEDERSSSEENIK). Residues 1003–1014 (DSDEEEDEDEDE) show a composition bias toward acidic residues. A Glycyl lysine isopeptide (Lys-Gly) (interchain with G-Cter in SUMO2) cross-link involves residue Lys-1051. Basic and acidic residues predominate over residues 1122–1133 (RNKAEGVKEHAG). Residues 1122–1245 (RNKAEGVKEH…DTRRGQSKSS (124 aa)) are disordered. A compositionally biased stretch (basic residues) spans 1147-1156 (GVKKPKRKRY). The span at 1176-1189 (LPDRRDLTESDLKS) shows a compositional bias: basic and acidic residues. Residues 1196-1211 (TPSSSVERDSTILQKS) show a composition bias toward polar residues. A compositionally biased stretch (basic residues) spans 1212–1222 (TKSRTHSKPVR). Ser-1318 bears the Phosphoserine mark. Glycyl lysine isopeptide (Lys-Gly) (interchain with G-Cter in SUMO2) cross-links involve residues Lys-1328, Lys-1329, and Lys-1398. Ser-1472 carries the post-translational modification Phosphoserine. Thr-1474 carries the post-translational modification Phosphothreonine. The segment at 1591–1627 (LSKSLESTTLQQSALKNKSSGAQPNLKVTPPSSMGSQ) is disordered. Residues 1595–1613 (LESTTLQQSALKNKSSGAQ) show a composition bias toward polar residues. Residue 1939 to 1946 (GPPGTGKS) coordinates ATP. Residues 2046 to 2063 (KKDLPSHIQEMLRRKEIL) carry the Bipartite nuclear localization signal motif. Residue Thr-2450 is modified to Phosphothreonine. Disordered stretches follow at residues 2450–2472 (THPPATAPEAPRPQGGLPSNRLD), 2486–2506 (HTPSDTVTSKGPERPLLQDRL), and 2569–2624 (SHRS…THHV). 2 stretches are compositionally biased toward basic and acidic residues: residues 2496–2506 (GPERPLLQDRL) and 2593–2608 (KYSDPDAGLSHKREPR). Positions 2632–2646 (RRRLDDSSAKRRQFL) are necessary for nuclear localization.

The protein belongs to the DNA2/NAM7 helicase family. Homodimer. Interacts with PER2; the interaction inhibits termination of circadian target genes. Interacts with CHD4, POLR2A, PRKDC and TRIM28. Interacts with UBE2I. Interacts (via N-terminus domain) with EXOSC9 (via C-terminus region); the interaction enhances SETX sumoylation. Interacts with NCL (via N-terminus domain). Interacts with PABPN1, PABPC1 and SF3B1. Interacts with SMN1/SMN2 and POLR2A; SMN1/SMN2 recruits SETX to POLR2A. Ubiquitinated. Post-translationally, sumoylated preferentially with SUMO2 or SUMO3. In terms of tissue distribution, expressed in cerebellum, hippocampus, olfactory bulb, Bergmann glial fibers, stellate cells and Purkinje cells. Expressed in the epithelial cells of the lens but not in mature lens fiber cells. Expressed in the retina (highly expressed in inner and outer segments of photoreceptors and outer plexiform layer cells but weakly expressed in the inner plexiform and ganglion cell layers). Expressed in the kidney.

Its subcellular location is the nucleus. The protein localises to the nucleoplasm. It localises to the nucleolus. It is found in the cytoplasm. The protein resides in the chromosome. Its subcellular location is the telomere. The protein localises to the cell projection. It localises to the axon. It is found in the growth cone. Probable RNA/DNA helicase involved in diverse aspects of RNA metabolism and genomic integrity. Plays a role in transcription regulation by its ability to modulate RNA Polymerase II (Pol II) binding to chromatin and through its interaction with proteins involved in transcription. Contributes to the mRNA splicing efficiency and splice site selection. Required for the resolution of R-loop RNA-DNA hybrid formation at G-rich pause sites located downstream of the poly(A) site, allowing XRN2 recruitment and XRN2-mediated degradation of the downstream cleaved RNA and hence efficient RNA polymerase II (RNAp II) transcription termination. Required for the 3' transcriptional termination of PER1 and CRY2, thus playing an important role in the circadian rhythm regulation. Involved in DNA double-strand breaks damage response generated by oxidative stress. In association with RRP45, targets the RNA exosome complex to sites of transcription-induced DNA damage. Plays a role in the development and maturation of germ cells: essential for male meiosis, acting at the interface of transcription and meiotic recombination, and in the process of gene silencing during meiotic sex chromosome inactivation (MSCI). Plays a role in neurite outgrowth in hippocampal cells through FGF8-activated signaling pathways. Inhibits retinoic acid-induced apoptosis. May be involved in telomeric stability through the regulation of telomere repeat-containing RNA (TERRA) transcription. The protein is Probable helicase senataxin of Mus musculus (Mouse).